The following is a 500-amino-acid chain: Probable 26S proteasome non-ATPase regulatory subunit 3 (500 aa).

Positions 253 to 432 (ARFLYYLGRI…GYMRTKESTD (180 aa)) constitute a PCI domain. The segment at 462-484 (RYPPKSYGKELESAEERREREQQ) is disordered. Residues 468–484 (YGKELESAEERREREQQ) are compositionally biased toward basic and acidic residues.

It belongs to the proteasome subunit S3 family. As to quaternary structure, the 26S proteasome is composed of a core protease, known as the 20S proteasome, capped at one or both ends by the 19S regulatory complex (RC). The RC is composed of at least 18 different subunits in two subcomplexes, the base and the lid, which form the portions proximal and distal to the 20S proteolytic core, respectively.

In terms of biological role, acts as a regulatory subunit of the 26 proteasome which is involved in the ATP-dependent degradation of ubiquitinated proteins. This is Probable 26S proteasome non-ATPase regulatory subunit 3 (DOXA2) from Anopheles stephensi (Indo-Pakistan malaria mosquito).